The following is a 149-amino-acid chain: Transcription factor HY5-like (149 aa).

Residues 1–77 (MSLQRPNGNS…RRRGRNPVDK (77 aa)) are disordered. Residues 23–36 (ESDEELLMVPDMEA) form an interaction with COP1 region. S24 is subject to Phosphoserine. The segment covering 55-64 (ELDQTQNGVS) has biased composition (polar residues). Positions 78–141 (EYRSLKRLLR…TMLRKMLINT (64 aa)) constitute a bZIP domain. Positions 80–100 (RSLKRLLRNRVSAQQARERKK) are basic motif. Residues 106-134 (LESRANELQNNNDQLEEKISTLTNENTML) form a leucine-zipper region.

The protein belongs to the bZIP family. In terms of assembly, heterodimer; heterodimerizes with HY5 via the leucine-zipper domains. Interacts with COP1 WD40 domain. Interacts with BBX24/STO and BBX25/STH. Post-translationally, ubiquitinated by COP1. Ubiquitination takes place in darkness and leads to its subsequent degradation, thereby preventing the activation of photomorphogenesis signals.

The protein localises to the nucleus. Functionally, transcription factor that promotes photomorphogenesis in light. Acts downstream of the light receptor network and directly affects transcription of light-induced genes. Specifically involved in the blue light specific pathway, suggesting that it participates in transmission of cryptochromes (CRY1 and CRY2) signals to downstream responses. In darkness, its degradation prevents the activation of light-induced genes. The chain is Transcription factor HY5-like (HYH) from Arabidopsis thaliana (Mouse-ear cress).